A 1090-amino-acid polypeptide reads, in one-letter code: Vinculin (1090 aa).

Tandem repeats lie at residues 339 to 446 (DADN…SQNS) and 455 to 561 (QNAQ…DLGD). The interval 339–561 (DADNVTVMRK…LKNALRDLGD (223 aa)) is 2 X repeats. 2 disordered regions span residues 811–842 (GVPMSNGRHSSYQESISRASPYNPPPPSSQVI) and 864–895 (DIPAPPRPPPPVELSPPPRPPPPPEYDEEEET). Over residues 817–830 (GRHSSYQESISRAS) the composition is skewed to polar residues. A compositionally biased stretch (pro residues) spans 866–887 (PAPPRPPPPVELSPPPRPPPPP).

This sequence belongs to the vinculin/alpha-catenin family. May interact with sorb-1. As to expression, expressed in gonadal sheath cells and the spermatheca. Expressed in body wall muscles.

The protein localises to the cytoplasm. The protein resides in the cytoskeleton. Its subcellular location is the cell junction. It localises to the adherens junction. It is found in the cell membrane. The protein localises to the focal adhesion. In terms of biological role, involved in cell adhesion. May be involved in the attachment of the actin-based microfilaments to the plasma membrane. Involved in ovulation. In Caenorhabditis elegans, this protein is Vinculin.